The sequence spans 351 residues: dTDP-glucose 4,6-dehydratase (351 aa).

NAD(+)-binding positions include 12–13 (FI), 32–35 (DALT), 58–59 (DI), 80–84 (FAAES), and T99. Residue S84 coordinates substrate. Substrate is bound at residue T133. The active-site Proton donor is the D134. Active-site proton acceptor residues include E135 and Y158. 158 to 162 (YSASK) serves as a coordination point for NAD(+). N187 contacts substrate. N188 is an NAD(+) binding site. Substrate is bound by residues 197–198 (KL), 213–215 (PVY), R222, N257, and 289–293 (DRPGH).

It belongs to the NAD(P)-dependent epimerase/dehydratase family. dTDP-glucose dehydratase subfamily. In terms of assembly, homodimer. It depends on NAD(+) as a cofactor.

The enzyme catalyses dTDP-alpha-D-glucose = dTDP-4-dehydro-6-deoxy-alpha-D-glucose + H2O. It functions in the pathway carbohydrate biosynthesis; dTDP-L-rhamnose biosynthesis. Its pathway is bacterial outer membrane biogenesis; LPS O-antigen biosynthesis. Catalyzes the dehydration of dTDP-D-glucose to form dTDP-6-deoxy-D-xylo-4-hexulose via a three-step process involving oxidation, dehydration and reduction. In Xanthomonas campestris pv. campestris (strain B100), this protein is dTDP-glucose 4,6-dehydratase (rfbB).